Consider the following 84-residue polypeptide: Putative membrane protein insertion efficiency factor (84 aa).

It belongs to the UPF0161 family.

Its subcellular location is the cell inner membrane. Could be involved in insertion of integral membrane proteins into the membrane. The protein is Putative membrane protein insertion efficiency factor of Shewanella denitrificans (strain OS217 / ATCC BAA-1090 / DSM 15013).